We begin with the raw amino-acid sequence, 228 residues long: Uracil-DNA glycosylase (228 aa).

Asp64 (proton acceptor) is an active-site residue.

It belongs to the uracil-DNA glycosylase (UDG) superfamily. UNG family.

Its subcellular location is the cytoplasm. It catalyses the reaction Hydrolyzes single-stranded DNA or mismatched double-stranded DNA and polynucleotides, releasing free uracil.. Its function is as follows. Excises uracil residues from the DNA which can arise as a result of misincorporation of dUMP residues by DNA polymerase or due to deamination of cytosine. The polypeptide is Uracil-DNA glycosylase (Yersinia enterocolitica serotype O:8 / biotype 1B (strain NCTC 13174 / 8081)).